A 641-amino-acid polypeptide reads, in one-letter code: NADH-ubiquinone oxidoreductase chain 5 (641 aa).

The next 17 helical transmembrane spans lie at 1-21 (MYLTIITLPLFAFLTVGVIGR), 33-53 (SLSIIISAILSLYGFYEIVLL), 59-79 (ITIYLSPWMNVIGAHADWAFY), 83-103 (ISITMCVVVSSISSLVHLYSI), 121-141 (LFTFFMLLLVTGNNYLLMFVG), 175-195 (VGDLGFVLGLFGIFWLFGSSD), 211-231 (ITIVTLFLLIAAIGKSAQLGL), 243-263 (TPVSALIHAATLVTAGVYLIL), 276-296 (LICVCVIGSLTAIFAATTGLF), 303-322 (VIAYSTCSQLGYMVFALGLS), 367-387 (ILPFTYTMILIGSLSLMALPF), 405-425 (FLVTGTFTYWLGTITATITAF), 453-473 (PLIMSIPLFLLSICSIFIGYI), 476-496 (KHLSVIGIGSSGIISGGVGTL), 512-532 (FGVQFYPLFASLLGISLALIV), 564-584 (WFDNVYNTVLISGSLHFGGIF), and 621-641 (IPHYASIIIIIPIFIILSIFI).

This sequence belongs to the complex I subunit 5 family.

The protein resides in the mitochondrion inner membrane. The enzyme catalyses a ubiquinone + NADH + 5 H(+)(in) = a ubiquinol + NAD(+) + 4 H(+)(out). Core subunit of the mitochondrial membrane respiratory chain NADH dehydrogenase (Complex I) that is believed to belong to the minimal assembly required for catalysis. Complex I functions in the transfer of electrons from NADH to the respiratory chain. The immediate electron acceptor for the enzyme is believed to be ubiquinone. This chain is NADH-ubiquinone oxidoreductase chain 5 (ND5), found in Allomyces macrogynus.